Reading from the N-terminus, the 401-residue chain is S-adenosylmethionine synthase (401 aa).

136–141 (GTGSSD) provides a ligand contact to ATP. Residues 278–305 (GDDGSVGRGNRSNGLITPSRPMSMEATS) are disordered.

The protein belongs to the AdoMet synthase 2 family. Mg(2+) serves as cofactor.

It carries out the reaction L-methionine + ATP + H2O = S-adenosyl-L-methionine + phosphate + diphosphate. It functions in the pathway amino-acid biosynthesis; S-adenosyl-L-methionine biosynthesis; S-adenosyl-L-methionine from L-methionine: step 1/1. Its function is as follows. Catalyzes the formation of S-adenosylmethionine from methionine and ATP. The polypeptide is S-adenosylmethionine synthase (Methanococcoides burtonii (strain DSM 6242 / NBRC 107633 / OCM 468 / ACE-M)).